Here is a 476-residue protein sequence, read N- to C-terminus: Trigger factor (476 aa).

The region spanning 174 to 261 (GDIAVVSFKG…LKDLKEKELP (88 aa)) is the PPIase FKBP-type domain. A disordered region spans residues 436–476 (KENTTKTSKTTKNSKTTKATKTTKTTKTTKTSKTQNKKEKK). Positions 440-469 (TKTSKTTKNSKTTKATKTTKTTKTTKTSKT) are enriched in low complexity.

It belongs to the FKBP-type PPIase family. Tig subfamily.

It localises to the cytoplasm. It catalyses the reaction [protein]-peptidylproline (omega=180) = [protein]-peptidylproline (omega=0). In terms of biological role, involved in protein export. Acts as a chaperone by maintaining the newly synthesized protein in an open conformation. Functions as a peptidyl-prolyl cis-trans isomerase. The protein is Trigger factor of Prochlorococcus marinus (strain MIT 9215).